The chain runs to 84 residues: MNQLVIQLIQLYKKIISPLLPPACRFTPTCSEYTIQAFRECGFFQAIQLSAWRILRCNPLSQGFEDPLPPNTKRTNLTHGRQTK.

Positions 61–84 (SQGFEDPLPPNTKRTNLTHGRQTK) are disordered. The span at 72 to 84 (TKRTNLTHGRQTK) shows a compositional bias: polar residues.

The protein belongs to the UPF0161 family.

It localises to the cell inner membrane. Its function is as follows. Could be involved in insertion of integral membrane proteins into the membrane. The chain is Putative membrane protein insertion efficiency factor from Leptospira borgpetersenii serovar Hardjo-bovis (strain JB197).